Consider the following 61-residue polypeptide: Small ribosomal subunit protein uS14 (61 aa).

Residues cysteine 24, cysteine 27, cysteine 40, and cysteine 43 each coordinate Zn(2+).

The protein belongs to the universal ribosomal protein uS14 family. Zinc-binding uS14 subfamily. In terms of assembly, part of the 30S ribosomal subunit. Contacts proteins S3 and S10. Zn(2+) serves as cofactor.

Binds 16S rRNA, required for the assembly of 30S particles and may also be responsible for determining the conformation of the 16S rRNA at the A site. This is Small ribosomal subunit protein uS14 from Leptospira biflexa serovar Patoc (strain Patoc 1 / Ames).